Here is a 268-residue protein sequence, read N- to C-terminus: Energy-coupling factor transporter transmembrane protein EcfT (268 aa).

The next 5 membrane-spanning stretches (helical) occupy residues 28 to 48 (FVFL…YLWV), 63 to 83 (LWFL…TLMM), 107 to 127 (ILEG…ATIM), 152 to 172 (LPVH…PTLM), and 248 to 268 (ISLT…YSGV).

It belongs to the energy-coupling factor EcfT family. Forms a stable energy-coupling factor (ECF) transporter complex composed of 2 membrane-embedded substrate-binding proteins (S component), 2 ATP-binding proteins (A component) and 2 transmembrane proteins (T component). May be able to interact with more than 1 S component at a time.

Its subcellular location is the cell membrane. In terms of biological role, transmembrane (T) component of an energy-coupling factor (ECF) ABC-transporter complex. Unlike classic ABC transporters this ECF transporter provides the energy necessary to transport a number of different substrates. This Staphylococcus aureus (strain 04-02981) protein is Energy-coupling factor transporter transmembrane protein EcfT.